The following is a 319-amino-acid chain: tRNA dimethylallyltransferase (319 aa).

15–22 (GPTASGKS) serves as a coordination point for ATP. Substrate is bound at residue 17–22 (TASGKS). Interaction with substrate tRNA stretches follow at residues 40–43 (DSRQ) and 164–168 (QRLVR).

The protein belongs to the IPP transferase family. In terms of assembly, monomer. Mg(2+) serves as cofactor.

The enzyme catalyses adenosine(37) in tRNA + dimethylallyl diphosphate = N(6)-dimethylallyladenosine(37) in tRNA + diphosphate. Its function is as follows. Catalyzes the transfer of a dimethylallyl group onto the adenine at position 37 in tRNAs that read codons beginning with uridine, leading to the formation of N6-(dimethylallyl)adenosine (i(6)A). This Chlorobium phaeobacteroides (strain DSM 266 / SMG 266 / 2430) protein is tRNA dimethylallyltransferase.